The sequence spans 498 residues: Acetyl-coenzyme A carboxylase carboxyl transferase subunit beta, chloroplastic (498 aa).

The region spanning 228 to 498 (LWVQCEICYG…LNHNLSRTLT (271 aa)) is the CoA carboxyltransferase N-terminal domain. 4 residues coordinate Zn(2+): Cys-232, Cys-235, Cys-251, and Cys-254. A C4-type zinc finger spans residues 232-254 (CEICYGLNYKKFFKSKMNICEQC).

The protein belongs to the AccD/PCCB family. As to quaternary structure, acetyl-CoA carboxylase is a heterohexamer composed of biotin carboxyl carrier protein, biotin carboxylase and 2 subunits each of ACCase subunit alpha and ACCase plastid-coded subunit beta (accD). The cofactor is Zn(2+).

It is found in the plastid. Its subcellular location is the chloroplast stroma. The catalysed reaction is N(6)-carboxybiotinyl-L-lysyl-[protein] + acetyl-CoA = N(6)-biotinyl-L-lysyl-[protein] + malonyl-CoA. It functions in the pathway lipid metabolism; malonyl-CoA biosynthesis; malonyl-CoA from acetyl-CoA: step 1/1. Its function is as follows. Component of the acetyl coenzyme A carboxylase (ACC) complex. Biotin carboxylase (BC) catalyzes the carboxylation of biotin on its carrier protein (BCCP) and then the CO(2) group is transferred by the transcarboxylase to acetyl-CoA to form malonyl-CoA. The chain is Acetyl-coenzyme A carboxylase carboxyl transferase subunit beta, chloroplastic from Populus alba (White poplar).